The sequence spans 119 residues: Large ribosomal subunit protein uL18 (119 aa).

It belongs to the universal ribosomal protein uL18 family. In terms of assembly, part of the 50S ribosomal subunit; part of the 5S rRNA/L5/L18/L25 subcomplex. Contacts the 5S and 23S rRNAs.

This is one of the proteins that bind and probably mediate the attachment of the 5S RNA into the large ribosomal subunit, where it forms part of the central protuberance. This chain is Large ribosomal subunit protein uL18, found in Helicobacter pylori (strain HPAG1).